A 93-amino-acid polypeptide reads, in one-letter code: Protein translocase subunit SecE (93 aa).

Positions 1 to 33 are disordered; sequence MTDALGSIDMPDAEDETREKKARKGGKRGKKGP. The span at 20-33 shows a compositional bias: basic residues; that stretch reads KKARKGGKRGKKGP. Residues 64 to 84 traverse the membrane as a helical segment; it reads TVVIVFVVIMIGLVTVIDFGF.

Belongs to the SecE/SEC61-gamma family. In terms of assembly, component of the Sec protein translocase complex. Heterotrimer consisting of SecY, SecE and SecG subunits. The heterotrimers can form oligomers, although 1 heterotrimer is thought to be able to translocate proteins. Interacts with the ribosome. Interacts with SecDF, and other proteins may be involved. Interacts with SecA.

It localises to the cell membrane. Its function is as follows. Essential subunit of the Sec protein translocation channel SecYEG. Clamps together the 2 halves of SecY. May contact the channel plug during translocation. The chain is Protein translocase subunit SecE from Streptomyces virginiae (Streptomyces cinnamonensis).